The primary structure comprises 265 residues: NAD kinase 2 (265 aa).

The Proton acceptor role is filled by Asp51. NAD(+) is bound by residues 51–52 (DG), 122–123 (NE), Arg149, Asp151, 162–167 (TAYNKS), and Ala186.

The protein belongs to the NAD kinase family. A divalent metal cation is required as a cofactor.

It is found in the cytoplasm. The catalysed reaction is NAD(+) + ATP = ADP + NADP(+) + H(+). Involved in the regulation of the intracellular balance of NAD and NADP, and is a key enzyme in the biosynthesis of NADP. Catalyzes specifically the phosphorylation on 2'-hydroxyl of the adenosine moiety of NAD to yield NADP. The polypeptide is NAD kinase 2 (Bacillus licheniformis (strain ATCC 14580 / DSM 13 / JCM 2505 / CCUG 7422 / NBRC 12200 / NCIMB 9375 / NCTC 10341 / NRRL NRS-1264 / Gibson 46)).